Consider the following 139-residue polypeptide: Thioredoxin H-type (139 aa).

The Thioredoxin domain maps to 20–132 (ELAGGNVHLI…LHKKITAILD (113 aa)). Catalysis depends on nucleophile residues Cys58 and Cys61. Residues Cys58 and Cys61 are joined by a disulfide bond.

The protein localises to the cytoplasm. In terms of biological role, participates in various redox reactions through the reversible oxidation of the active center dithiol to a disulfide. The H form is known to activate a number of cytosolic enzymes. The protein is Thioredoxin H-type of Populus jackii (Balm of Gilead).